The chain runs to 472 residues: Ribosomal protein uS12 methylthiotransferase RimO (472 aa).

Residues 1–114 (MKFHIITLGC…IGDVVDTLQR (114 aa)) form the MTTase N-terminal domain. [4Fe-4S] cluster contacts are provided by Cys-10, Cys-46, Cys-78, Cys-171, Cys-175, and Cys-178. The Radical SAM core domain maps to 157–388 (RITGPSAYLK…MRLQQGISRQ (232 aa)). Residues 391–460 (RRWVGRVIRV…DYDLWGEMVE (70 aa)) form the TRAM domain.

This sequence belongs to the methylthiotransferase family. RimO subfamily. [4Fe-4S] cluster is required as a cofactor.

The protein resides in the cytoplasm. The enzyme catalyses L-aspartate(89)-[ribosomal protein uS12]-hydrogen + (sulfur carrier)-SH + AH2 + 2 S-adenosyl-L-methionine = 3-methylsulfanyl-L-aspartate(89)-[ribosomal protein uS12]-hydrogen + (sulfur carrier)-H + 5'-deoxyadenosine + L-methionine + A + S-adenosyl-L-homocysteine + 2 H(+). Catalyzes the methylthiolation of an aspartic acid residue of ribosomal protein uS12. The protein is Ribosomal protein uS12 methylthiotransferase RimO of Roseiflexus sp. (strain RS-1).